The sequence spans 514 residues: 1-pyrroline-5-carboxylate dehydrogenase (514 aa).

Residues Glu-286 and Cys-320 contribute to the active site.

Belongs to the aldehyde dehydrogenase family. RocA subfamily.

The catalysed reaction is L-glutamate 5-semialdehyde + NAD(+) + H2O = L-glutamate + NADH + 2 H(+). It functions in the pathway amino-acid degradation; L-proline degradation into L-glutamate; L-glutamate from L-proline: step 2/2. The chain is 1-pyrroline-5-carboxylate dehydrogenase from Staphylococcus haemolyticus (strain JCSC1435).